We begin with the raw amino-acid sequence, 280 residues long: Dexamethasone-induced Ras-related protein 1 (280 aa).

An S-nitrosocysteine modification is found at Cys11. Gly31–Thr38 is a GTP binding site. Residues Tyr53 to His61 carry the Effector region motif. Residues Asp78 to Asn82 and Asn145 to Asp148 each bind GTP. Residue Cys277 is modified to Cysteine methyl ester. The S-farnesyl cysteine moiety is linked to residue Cys277. The propeptide at Val278–Ser280 is removed in mature form.

It belongs to the small GTPase superfamily. RasD family. As to quaternary structure, forms a ternary complex with CAPON and NOS1. Component of a complex, at least composed of APBB1, RASD1/DEXRAS1 and APP. Interacts with APBB1/FE65. Forms. S-nitrosylation stimulates guanine-nucleotide exchange activity. Prominently found in brain at both mRNA and protein levels. Moderate expression in testis and lung. Slightly expressed in heart, spleen, skeletal muscle, liver and kidney.

It localises to the cell membrane. The protein localises to the cytoplasm. Its subcellular location is the perinuclear region. The protein resides in the nucleus. Functionally, small GTPase. Negatively regulates the transcription regulation activity of the APBB1/FE65-APP complex via its interaction with APBB1/FE65. The chain is Dexamethasone-induced Ras-related protein 1 (Rasd1) from Rattus norvegicus (Rat).